Reading from the N-terminus, the 74-residue chain is Exodeoxyribonuclease 7 small subunit (74 aa).

The protein belongs to the XseB family. In terms of assembly, heterooligomer composed of large and small subunits.

The protein localises to the cytoplasm. The enzyme catalyses Exonucleolytic cleavage in either 5'- to 3'- or 3'- to 5'-direction to yield nucleoside 5'-phosphates.. Functionally, bidirectionally degrades single-stranded DNA into large acid-insoluble oligonucleotides, which are then degraded further into small acid-soluble oligonucleotides. The protein is Exodeoxyribonuclease 7 small subunit of Neisseria meningitidis serogroup C / serotype 2a (strain ATCC 700532 / DSM 15464 / FAM18).